A 440-amino-acid chain; its full sequence is Elongation factor 1-gamma (440 aa).

Alanine 2 is modified (N-acetylalanine). In terms of domain architecture, GST N-terminal spans alanine 2–serine 87. Residues threonine 88–phenylalanine 216 enclose the GST C-terminal domain. Residues lysine 147 and lysine 212 each carry the N6-acetyllysine modification. Over residues phenylalanine 221–alanine 257 the composition is skewed to basic and acidic residues. The interval phenylalanine 221–aspartate 267 is disordered. Residue lysine 256 forms a Glycyl lysine isopeptide (Lys-Gly) (interchain with G-Cter in SUMO1) linkage. In terms of domain architecture, EF-1-gamma C-terminal spans alanine 279 to lysine 440. Residue lysine 288 forms a Glycyl lysine isopeptide (Lys-Gly) (interchain with G-Cter in SUMO2) linkage. Lysine 404 is subject to N6-acetyllysine. Lysine 437 carries the N6-acetyllysine; alternate modification. Position 437 is an N6-malonyllysine; alternate (lysine 437).

In terms of assembly, EF-1 is composed of four subunits: alpha, beta, delta, and gamma.

Probably plays a role in anchoring the complex to other cellular components. The polypeptide is Elongation factor 1-gamma (EEF1G) (Bos taurus (Bovine)).